A 262-amino-acid chain; its full sequence is 3-methyl-2-oxobutanoate hydroxymethyltransferase (262 aa).

2 residues coordinate Mg(2+): aspartate 42 and aspartate 81. Residues 42 to 43, aspartate 81, and lysine 110 contribute to the 3-methyl-2-oxobutanoate site; that span reads DS. A Mg(2+)-binding site is contributed by glutamate 112. Residue glutamate 180 is the Proton acceptor of the active site.

This sequence belongs to the PanB family. Homodecamer; pentamer of dimers. Requires Mg(2+) as cofactor.

The protein resides in the cytoplasm. It carries out the reaction 3-methyl-2-oxobutanoate + (6R)-5,10-methylene-5,6,7,8-tetrahydrofolate + H2O = 2-dehydropantoate + (6S)-5,6,7,8-tetrahydrofolate. It participates in cofactor biosynthesis; (R)-pantothenate biosynthesis; (R)-pantoate from 3-methyl-2-oxobutanoate: step 1/2. Functionally, catalyzes the reversible reaction in which hydroxymethyl group from 5,10-methylenetetrahydrofolate is transferred onto alpha-ketoisovalerate to form ketopantoate. This is 3-methyl-2-oxobutanoate hydroxymethyltransferase from Legionella pneumophila (strain Paris).